Reading from the N-terminus, the 398-residue chain is Acetate kinase (398 aa).

Asn8 lines the Mg(2+) pocket. Lys15 serves as a coordination point for ATP. Arg89 is a substrate binding site. Catalysis depends on Asp146, which acts as the Proton donor/acceptor. ATP contacts are provided by residues His206–Gly210, Asp283–Arg285, and Gly331–Asn335. Glu383 contacts Mg(2+).

Belongs to the acetokinase family. As to quaternary structure, homodimer. It depends on Mg(2+) as a cofactor. The cofactor is Mn(2+).

It is found in the cytoplasm. It catalyses the reaction acetate + ATP = acetyl phosphate + ADP. It functions in the pathway metabolic intermediate biosynthesis; acetyl-CoA biosynthesis; acetyl-CoA from acetate: step 1/2. Functionally, catalyzes the formation of acetyl phosphate from acetate and ATP. Can also catalyze the reverse reaction. This chain is Acetate kinase, found in Streptococcus pyogenes serotype M4 (strain MGAS10750).